The following is an 871-amino-acid chain: Patatin-like phospholipase domain-containing protein CNBE2340 (871 aa).

The disordered stretch occupies residues 20–53 (NEDSPLSPRSFSLPPESPQLSTASPIHQRVSRKR). Residues 23-33 (SPLSPRSFSLP) show a composition bias toward low complexity. Residues 68–88 (WPLLFFIFFIIYLEFSAYVIT) traverse the membrane as a helical segment. Positions 243–435 (LCLSGGASFG…REDIPLGSLH (193 aa)) constitute a PNPLA domain. Residues 274–278 (GTSAG) carry the GXSXG motif. The active-site Nucleophile is the serine 276. The active-site Proton acceptor is aspartate 422. Disordered regions lie at residues 586 to 707 (ALSH…NFGD), 720 to 748 (LSSPFRSIRSNTSSSSNNVQSPSSSQRFR), and 760 to 871 (VSES…QDGA). Polar residues-rich tracts occupy residues 594–606 (NDPATSLPETNPE) and 687–706 (PTHSPIATESPQRNYTSNFG). Residues 721-748 (SSPFRSIRSNTSSSSNNVQSPSSSQRFR) show a composition bias toward low complexity. The segment covering 798-820 (VESHSDRSEDEMLHSGANVKEEY) has biased composition (basic and acidic residues).

This sequence belongs to the PLPL family.

The protein localises to the membrane. In terms of biological role, probable lipid hydrolase. The chain is Patatin-like phospholipase domain-containing protein CNBE2340 from Cryptococcus neoformans var. neoformans serotype D (strain B-3501A) (Filobasidiella neoformans).